A 395-amino-acid polypeptide reads, in one-letter code: Chalcone synthase (395 aa).

C164 is an active-site residue.

This sequence belongs to the thiolase-like superfamily. Chalcone/stilbene synthases family.

It catalyses the reaction (E)-4-coumaroyl-CoA + 3 malonyl-CoA + 3 H(+) = 2',4,4',6'-tetrahydroxychalcone + 3 CO2 + 4 CoA. Its pathway is secondary metabolite biosynthesis; flavonoid biosynthesis. Its function is as follows. The primary product of this enzyme is 4,2',4',6'-tetrahydroxychalcone (also termed naringenin-chalcone or chalcone) which can under specific conditions spontaneously isomerize into naringenin. This is Chalcone synthase (CHS) from Betula pendula (European white birch).